Here is a 209-residue protein sequence, read N- to C-terminus: 2-phospho-L-lactate guanylyltransferase (209 aa).

Belongs to the CofC family. As to quaternary structure, homodimer.

It catalyses the reaction (2S)-2-phospholactate + GTP + H(+) = (2S)-lactyl-2-diphospho-5'-guanosine + diphosphate. Its pathway is cofactor biosynthesis; coenzyme F420 biosynthesis. Functionally, guanylyltransferase that catalyzes the activation of (2S)-2-phospholactate (2-PL) as (2S)-lactyl-2-diphospho-5'-guanosine, via the condensation of 2-PL with GTP. It is involved in the biosynthesis of coenzyme F420, a hydride carrier cofactor. The chain is 2-phospho-L-lactate guanylyltransferase from Halobacterium salinarum (strain ATCC 29341 / DSM 671 / R1).